The following is a 260-amino-acid chain: Eukaryotic translation initiation factor 3 subunit G-2 (260 aa).

An RRM domain is found at 180–258 (CAVRISNLSE…LILSVEWSKP (79 aa)).

It belongs to the eIF-3 subunit G family. As to quaternary structure, component of the eukaryotic translation initiation factor 3 (eIF-3) complex. The eIF-3 complex interacts with pix.

It is found in the cytoplasm. In terms of biological role, RNA-binding component of the eukaryotic translation initiation factor 3 (eIF-3) complex, which is involved in protein synthesis of a specialized repertoire of mRNAs and, together with other initiation factors, stimulates binding of mRNA and methionyl-tRNAi to the 40S ribosome. The eIF-3 complex specifically targets and initiates translation of a subset of mRNAs involved in cell proliferation. This subunit can bind 18S rRNA. The sequence is that of Eukaryotic translation initiation factor 3 subunit G-2 from Drosophila grimshawi (Hawaiian fruit fly).